A 471-amino-acid chain; its full sequence is 5-hydroxytryptamine receptor 2A (471 aa).

Topologically, residues 1–80 are extracellular; it reads MDILCEENTS…LQEKNWSALL (80 aa). 5 N-linked (GlcNAc...) asparagine glycosylation sites follow: Asn8, Asn38, Asn44, Asn51, and Asn54. Residues 81-97 form a helical membrane-spanning segment; it reads TAVVIILTIAGNILVIM. Residues 98 to 111 lie on the Cytoplasmic side of the membrane; that stretch reads AVSLEKKLQNATNY. Residues 112–137 traverse the membrane as a helical segment; it reads FLMSLAIADMLLGFLVMPVSMLTILY. Residues 138-146 lie on the Extracellular side of the membrane; sequence GYRWPLPSK. Residues 147-171 form a helical membrane-spanning segment; that stretch reads LCAVWIYLDVLFSTASIMHLCAISL. Cys148 and Cys227 form a disulfide bridge. Asp155 serves as a coordination point for serotonin. The DRY motif; important for ligand-induced conformation changes motif lies at 172–174; the sequence is DRY. Residues 172 to 191 lie on the Cytoplasmic side of the membrane; that stretch reads DRYVAIQNPIHHSRFNSRTK. A helical membrane pass occupies residues 192–215; the sequence is AFLKIIAVWTISVGISMPIPVFGL. The Extracellular portion of the chain corresponds to 216 to 232; that stretch reads QDDSKVFKEGSCLLADD. Residues 233–258 traverse the membrane as a helical segment; that stretch reads NFVLIGSFVSFFIPLTIMVITYFLTI. At 259-322 the chain is on the cytoplasmic side; that stretch reads KSLQKEATLC…QSISNEQKAC (64 aa). Position 280 is a phosphoserine (Ser280). The helical transmembrane segment at 323-348 threads the bilayer; that stretch reads KVLGIVFFLFVVMWCPFFITNIMAVI. Asn343 is a binding site for serotonin. The cysteines at positions 349 and 353 are disulfide-linked. The Extracellular portion of the chain corresponds to 349-356; the sequence is CKESCNED. A helical transmembrane segment spans residues 357 to 382; the sequence is VIGALLNVFVWIGYLSSAVNPLVYTL. The NPxxY motif; important for ligand-induced conformation changes and signaling motif lies at 376 to 380; the sequence is NPLVY. The Cytoplasmic segment spans residues 383-471; sequence FNKTYRSAFS…DGVNEKVSCV (89 aa). Over residues 451-465 the composition is skewed to basic and acidic residues; the sequence is QHSEEASKDNSDGVN. The interval 451 to 471 is disordered; that stretch reads QHSEEASKDNSDGVNEKVSCV. A PDZ-binding motif is present at residues 469–471; it reads SCV.

The protein belongs to the G-protein coupled receptor 1 family. As to quaternary structure, interacts (via C-terminus) with MPDZ and PATJ. May interact (via C-terminus) with MPP3, PRDX6, DLG4, DLG1, CASK, APBA1 and MAGI2. Interacts with GRM2 and DRD2; this may affect signaling. As to expression, detected in brain cortex (at protein level). Detected in blood platelets.

The protein resides in the cell membrane. It localises to the cell projection. Its subcellular location is the dendrite. The protein localises to the axon. It is found in the cytoplasmic vesicle. The protein resides in the membrane. It localises to the caveola. Its subcellular location is the presynapse. With respect to regulation, G-protein coupled receptor activity is regulated by lipids: oleamide increases HTR2A-mediated activity. Inhibited by IHCH-7179 small molecule: IHCH-7179 acts both as an agonist activator for HTR1A and as an antagonist inhibitor for HTR2A. Functionally, G-protein coupled receptor for 5-hydroxytryptamine (serotonin). Also functions as a receptor for various drugs and psychoactive substances, including mescaline, psilocybin, 1-(2,5-dimethoxy-4-iodophenyl)-2-aminopropane (DOI) and lysergic acid diethylamide (LSD). Ligand binding causes a conformation change that triggers signaling via guanine nucleotide-binding proteins (G proteins) and modulates the activity of downstream effectors. HTR2A is coupled to G(q)/G(11) G alpha proteins and activates phospholipase C-beta, releasing diacylglycerol (DAG) and inositol 1,4,5-trisphosphate (IP3) second messengers that modulate the activity of phosphatidylinositol 3-kinase and promote the release of Ca(2+) ions from intracellular stores, respectively. Beta-arrestin family members inhibit signaling via G proteins and mediate activation of alternative signaling pathways. Affects neural activity, perception, cognition and mood. Plays a role in the regulation of behavior, including responses to anxiogenic situations and psychoactive substances. Plays a role in intestinal smooth muscle contraction, and may play a role in arterial vasoconstriction. Its function is as follows. (Microbial infection) Acts as a receptor for human JC polyomavirus/JCPyV. The protein is 5-hydroxytryptamine receptor 2A of Homo sapiens (Human).